We begin with the raw amino-acid sequence, 65 residues long: Metallothionein-like protein 3B (65 aa).

The protein belongs to the metallothionein superfamily. Type 15 family. Expressed in leaves and rachis.

In terms of biological role, metallothioneins have a high content of cysteine residues that bind various heavy metals. The sequence is that of Metallothionein-like protein 3B (MT3B) from Oryza sativa subsp. japonica (Rice).